We begin with the raw amino-acid sequence, 102 residues long: Co-chaperonin GroES (102 aa).

Belongs to the GroES chaperonin family. In terms of assembly, heptamer of 7 subunits arranged in a ring. Interacts with the chaperonin GroEL.

The protein localises to the cytoplasm. In terms of biological role, together with the chaperonin GroEL, plays an essential role in assisting protein folding. The GroEL-GroES system forms a nano-cage that allows encapsulation of the non-native substrate proteins and provides a physical environment optimized to promote and accelerate protein folding. GroES binds to the apical surface of the GroEL ring, thereby capping the opening of the GroEL channel. The chain is Co-chaperonin GroES from Chlamydia trachomatis serovar L2 (strain ATCC VR-902B / DSM 19102 / 434/Bu).